A 448-amino-acid chain; its full sequence is Nuclear distribution protein PAC1 (448 aa).

One can recognise a LisH domain in the interval 9–41; it reads QAEELHKSIIAYLAANNFQDSVTAMRTELNLGE. The tract at residues 74-95 is disordered; the sequence is SATPTSLSNRKQDPASWLPAGP. 7 WD repeats span residues 102–143, 145–185, 189–236, 239–278, 283–343, 345–384, and 389–444; these read SHRT…RTVK, HTKA…KNIR, GHDH…CLKT, GHSD…PETK, GHEH…IKTL, GHDN…KCVK, and MHEH…TSLR.

Belongs to the WD repeat LIS1/nudF family. As to quaternary structure, self-associates. Interacts with NDL1 and dynein.

The protein localises to the cytoplasm. The protein resides in the cytoskeleton. It localises to the spindle pole. Functionally, positively regulates the activity of the minus-end directed microtubule motor protein dynein. May enhance dynein-mediated microtubule sliding by targeting dynein to the microtubule plus end. Required for nuclear migration during vegetative growth as well as development. Required for retrograde early endosome (EE) transport from the hyphal tip. Required for localization of dynein to the mitotic spindle poles. Recruits additional proteins to the dynein complex at SPBs. The chain is Nuclear distribution protein PAC1 from Fusarium vanettenii (strain ATCC MYA-4622 / CBS 123669 / FGSC 9596 / NRRL 45880 / 77-13-4) (Fusarium solani subsp. pisi).